The following is a 182-amino-acid chain: Probable phosphoheptose isomerase (182 aa).

The region spanning 29 to 182 (ISSAISSGNK…MICAMIDEKF (154 aa)) is the SIS domain. 44 to 46 (NGG) serves as a coordination point for substrate. Zn(2+) contacts are provided by His53 and Glu57. Substrate contacts are provided by residues Glu57, 86-87 (ND), 112-114 (STS), Ser117, and Gln164. Zn(2+)-binding residues include Gln164 and His172.

Belongs to the SIS family. GmhA subfamily. The cofactor is Zn(2+).

It is found in the cytoplasm. The enzyme catalyses 2 D-sedoheptulose 7-phosphate = D-glycero-alpha-D-manno-heptose 7-phosphate + D-glycero-beta-D-manno-heptose 7-phosphate. The protein operates within carbohydrate biosynthesis; D-glycero-D-manno-heptose 7-phosphate biosynthesis; D-glycero-alpha-D-manno-heptose 7-phosphate and D-glycero-beta-D-manno-heptose 7-phosphate from sedoheptulose 7-phosphate: step 1/1. Its function is as follows. Catalyzes the isomerization of sedoheptulose 7-phosphate in D-glycero-D-manno-heptose 7-phosphate. This Thermoplasma acidophilum (strain ATCC 25905 / DSM 1728 / JCM 9062 / NBRC 15155 / AMRC-C165) protein is Probable phosphoheptose isomerase.